Reading from the N-terminus, the 516-residue chain is Ammonium transporter Amt1 (516 aa).

The next 11 membrane-spanning stretches (helical) occupy residues Tyr17–Leu37, Ala59–Leu79, Ile101–Val121, Tyr130–Trp150, Leu170–Ala190, Met214–Gly234, Val258–Thr278, Pro286–His306, Val307–Tyr327, Val342–Val362, and Val374–Ala394. The tract at residues Ile426–Gln516 is disordered. Basic and acidic residues predominate over residues Asn445–Gly491.

The protein belongs to the ammonia transporter channel (TC 1.A.11.2) family. In terms of assembly, homotrimer. Interacts with both GlnK1 and GlnK2 after ammonium shock. Interaction is rapid, reversible and dependent on nitrogen source.

Its subcellular location is the cell membrane. Its function is as follows. Involved in the uptake of ammonium/ammonia (NH(4)(+)/NH(3)). Transport is electrogenic. The sequence is that of Ammonium transporter Amt1 from Haloferax mediterranei (strain ATCC 33500 / DSM 1411 / JCM 8866 / NBRC 14739 / NCIMB 2177 / R-4) (Halobacterium mediterranei).